A 69-amino-acid chain; its full sequence is FXYD domain-containing ion transport regulator 11 (69 aa).

The N-terminal stretch at 1 to 22 (MSQLTELVLLTVFLALFSRAEA) is a signal peptide. Residues 23 to 33 (NPFVYNYEALR) are Extracellular-facing. A helical transmembrane segment spans residues 34-54 (IGGLVFTCVLVAGAVTALCWG). At 55–69 (QCKPKRKHDDDASKI) the chain is on the cytoplasmic side.

The protein belongs to the FXYD family. As to expression, detected in adult gill and in larval skin at 2 days post-fertilization (at protein level). In adult gill, strong expression is found in the basal regions of the secondary lamellae.

It is found in the cell membrane. Its function is as follows. May modulate the activity of a sodium/potassium-transporting ATPase. This chain is FXYD domain-containing ion transport regulator 11, found in Danio rerio (Zebrafish).